The sequence spans 285 residues: Pantothenate synthetase (285 aa).

Residue 32-39 (MGALHDGH) coordinates ATP. The active-site Proton donor is histidine 39. Glutamine 63 lines the (R)-pantoate pocket. Glutamine 63 serves as a coordination point for beta-alanine. 149 to 152 (GEKD) is an ATP binding site. Residue glutamine 155 participates in (R)-pantoate binding. Residues valine 178 and 186–189 (MSSR) each bind ATP.

Belongs to the pantothenate synthetase family. In terms of assembly, homodimer.

The protein localises to the cytoplasm. The catalysed reaction is (R)-pantoate + beta-alanine + ATP = (R)-pantothenate + AMP + diphosphate + H(+). Its pathway is cofactor biosynthesis; (R)-pantothenate biosynthesis; (R)-pantothenate from (R)-pantoate and beta-alanine: step 1/1. In terms of biological role, catalyzes the condensation of pantoate with beta-alanine in an ATP-dependent reaction via a pantoyl-adenylate intermediate. The chain is Pantothenate synthetase from Ruegeria pomeroyi (strain ATCC 700808 / DSM 15171 / DSS-3) (Silicibacter pomeroyi).